Consider the following 803-residue polypeptide: Cation channel sperm-associated auxiliary subunit delta (803 aa).

A signal peptide spans 1-15 (MLMLMLAAVATVVRA). Over 16–720 (QTVCRFRTVR…ALPVAEFRPM (705 aa)) the chain is Extracellular. Disulfide bonds link Cys19–Cys365, Cys55–Cys142, Cys141–Cys148, Cys383–Cys492, Cys506–Cys698, Cys521–Cys568, and Cys620–Cys648. N-linked (GlcNAc...) asparagine glycans are attached at residues Asn226, Asn418, Asn436, Asn468, Asn534, Asn545, and Asn626. A helical membrane pass occupies residues 721-742 (TSILLMVTVTLFTMWLAYAIPK). Residues 743-803 (QLRTERGRRL…QIGKKPDIKK (61 aa)) are Cytoplasmic-facing. Residues 782–803 (SRRVKDQPEKIPQIGKKPDIKK) are disordered.

It belongs to the CATSPERD family. In terms of assembly, component of the CatSper complex or CatSpermasome composed of the core pore-forming members CATSPER1, CATSPER2, CATSPER3 and CATSPER4 as well as auxiliary members CATSPERB, CATSPERG, CATSPERD, CATSPERE, CATSPERZ, C2CD6/CATSPERT, SLCO6C1, TMEM249, TMEM262 and EFCAB9. HSPA1 may be an additional auxiliary complex member. The core complex members CATSPER1, CATSPER2, CATSPER3 and CATSPER4 form a heterotetrameric channel. The auxiliary CATSPERB, CATSPERG, CATSPERD and CATSPERE subunits form a pavilion-like structure over the pore which stabilizes the complex through interactions with CATSPER4, CATSPER3, CATSPER1 and CATSPER2 respectively. SLCO6C1 interacts with CATSPERE and TMEM262/CATSPERH interacts with CATSPERB, further stabilizing the complex. C2CD6/CATSPERT interacts at least with CATSPERD and is required for targeting the CatSper complex in the flagellar membrane.

It is found in the cell projection. It localises to the cilium. The protein resides in the flagellum membrane. Its function is as follows. Auxiliary component of the CatSper complex, a complex involved in sperm cell hyperactivation. Sperm cell hyperactivation is needed for sperm motility which is essential late in the preparation of sperm for fertilization. Required for CATSPER1 stability before intraflagellar transport and/or incorporation of the CatSper complex channel into the flagellar membrane. This Rattus norvegicus (Rat) protein is Cation channel sperm-associated auxiliary subunit delta.